The primary structure comprises 243 residues: 23S rRNA (guanosine-2'-O-)-methyltransferase RlmB (243 aa).

3 residues coordinate S-adenosyl-L-methionine: Gly196, Ile216, and Leu225.

It belongs to the class IV-like SAM-binding methyltransferase superfamily. RNA methyltransferase TrmH family. RlmB subfamily. In terms of assembly, homodimer.

The protein resides in the cytoplasm. It carries out the reaction guanosine(2251) in 23S rRNA + S-adenosyl-L-methionine = 2'-O-methylguanosine(2251) in 23S rRNA + S-adenosyl-L-homocysteine + H(+). Functionally, specifically methylates the ribose of guanosine 2251 in 23S rRNA. The protein is 23S rRNA (guanosine-2'-O-)-methyltransferase RlmB of Salmonella typhi.